The primary structure comprises 1623 residues: RING finger protein 17 (1623 aa).

The tract at residues 1 to 22 (MAAEASKTGPSRSSYQRMGRKS) is disordered. An RING-type zinc finger spans residues 32–75 (CTRCGRRVSRSSGHHCELQCGHAFCELCLLMTEECTTIICPDCE). An N6-acetyllysine modification is found at Lys-234. Tudor domains lie at 726–784 (CPVQ…FLNA), 962–1021 (KWEN…LKTM), and 1228–1285 (FWKK…PDIP). The segment at 1438-1462 (NQSNQHSDTDDSGVSGESESESLDE) is disordered. The Tudor 4 domain occupies 1479 to 1539 (DFRTEMPCLA…CQIPSHLMRY (61 aa)).

In terms of assembly, interacts with MXD1, MXD3, MXD4, MXI1 and PIWIL1. Self-associates. As to expression, testis specific.

The protein resides in the cytoplasm. The protein localises to the nucleus. In terms of biological role, seems to be involved in regulation of transcriptional activity of MYC. In vitro, inhibits DNA-binding activity of Mad-MAX heterodimers. Can recruit Mad transcriptional repressors (MXD1, MXD3, MXD4 and MXI1) to the cytoplasm. May be involved in spermiogenesis. The chain is RING finger protein 17 (RNF17) from Homo sapiens (Human).